The primary structure comprises 294 residues: Glyceraldehyde-3-phosphate dehydrogenase (294 aa).

NAD(+) contacts are provided by D19, K63, and T105. Residues 134 to 136 and T165 each bind D-glyceraldehyde 3-phosphate; that span reads SCT. The Nucleophile role is filled by C135. The tract at residues 169 to 188 is disordered; that stretch reads KTVDGPSHKDWRGGRGASQN. Residues 194 to 195 and R217 contribute to the D-glyceraldehyde 3-phosphate site; that span reads TG.

The protein belongs to the glyceraldehyde-3-phosphate dehydrogenase family. As to quaternary structure, homotetramer.

Its subcellular location is the cytoplasm. The catalysed reaction is D-glyceraldehyde 3-phosphate + phosphate + NAD(+) = (2R)-3-phospho-glyceroyl phosphate + NADH + H(+). It functions in the pathway carbohydrate degradation; glycolysis; pyruvate from D-glyceraldehyde 3-phosphate: step 1/5. Its function is as follows. Catalyzes the oxidative phosphorylation of glyceraldehyde 3-phosphate (G3P) to 1,3-bisphosphoglycerate (BPG) using the cofactor NAD. The first reaction step involves the formation of a hemiacetal intermediate between G3P and a cysteine residue, and this hemiacetal intermediate is then oxidized to a thioester, with concomitant reduction of NAD to NADH. The reduced NADH is then exchanged with the second NAD, and the thioester is attacked by a nucleophilic inorganic phosphate to produce BPG. The sequence is that of Glyceraldehyde-3-phosphate dehydrogenase (gap) from Serratia marcescens.